A 55-amino-acid polypeptide reads, in one-letter code: Large ribosomal subunit protein bL33B (55 aa).

It belongs to the bacterial ribosomal protein bL33 family.

This chain is Large ribosomal subunit protein bL33B, found in Kineococcus radiotolerans (strain ATCC BAA-149 / DSM 14245 / SRS30216).